Consider the following 199-residue polypeptide: UPF0301 protein Vapar_4617 (199 aa).

It belongs to the UPF0301 (AlgH) family.

The chain is UPF0301 protein Vapar_4617 from Variovorax paradoxus (strain S110).